Reading from the N-terminus, the 775-residue chain is Lon protease (775 aa).

A Lon N-terminal domain is found at 6-207; sequence LPLMALRDIV…TIINILTSNI (202 aa). 356-363 lines the ATP pocket; the sequence is GPPGVGKT. Residues 592-773 enclose the Lon proteolytic domain; sequence NDQIGSTTGL…DQVLEHALTK (182 aa). Residues S679 and K722 contribute to the active site.

Belongs to the peptidase S16 family. In terms of assembly, homohexamer. Organized in a ring with a central cavity.

The protein localises to the cytoplasm. It carries out the reaction Hydrolysis of proteins in presence of ATP.. Functionally, ATP-dependent serine protease that mediates the selective degradation of mutant and abnormal proteins as well as certain short-lived regulatory proteins. Required for cellular homeostasis and for survival from DNA damage and developmental changes induced by stress. Degrades polypeptides processively to yield small peptide fragments that are 5 to 10 amino acids long. Binds to DNA in a double-stranded, site-specific manner. This Rickettsia bellii (strain RML369-C) protein is Lon protease.